The following is a 1049-amino-acid chain: RTX-III toxin determinant A from serotype 2 (1049 aa).

3 helical membrane-spanning segments follow: residues 154–170, 315–331, and 397–413; these read TIIS…LAGI, ALIA…LAFL, and LVGA…TGLI. Hemolysin-type calcium-binding repeat units lie at residues 743-760, 761-778, 779-796, 797-814, 825-842, and 843-860; these read KGSK…DDLL, NGND…NDEL, RGDN…DDKL, LGGN…NDEL, RGGK…SDLL, and DGGE…SDFY.

The protein belongs to the RTX prokaryotic toxin (TC 1.C.11) family. Palmitoylated by ApxIIIC. The toxin only becomes active when modified.

Its subcellular location is the secreted. It is found in the host cell membrane. Does not have hemolytic activity but shows a strong cytotoxicity towards alveolar macrophages and neutrophils. The polypeptide is RTX-III toxin determinant A from serotype 2 (apxIIIA) (Actinobacillus pleuropneumoniae (Haemophilus pleuropneumoniae)).